We begin with the raw amino-acid sequence, 316 residues long: DNA-directed RNA polymerase subunit alpha (316 aa).

An alpha N-terminal domain (alpha-NTD) region spans residues 1 to 232 (MSGNDLFPST…DLFNPLHHCS (232 aa)). Residues 247–316 (KINDILVEEL…LNIYLPKEKY (70 aa)) are alpha C-terminal domain (alpha-CTD).

This sequence belongs to the RNA polymerase alpha chain family. In plastids the minimal PEP RNA polymerase catalytic core is composed of four subunits: alpha, beta, beta', and beta''. When a (nuclear-encoded) sigma factor is associated with the core the holoenzyme is formed, which can initiate transcription.

The protein localises to the plastid. It is found in the chloroplast. It carries out the reaction RNA(n) + a ribonucleoside 5'-triphosphate = RNA(n+1) + diphosphate. Its function is as follows. DNA-dependent RNA polymerase catalyzes the transcription of DNA into RNA using the four ribonucleoside triphosphates as substrates. The polypeptide is DNA-directed RNA polymerase subunit alpha (Mesostigma viride (Green alga)).